Consider the following 751-residue polypeptide: Proton-associated sugar transporter A (751 aa).

6 helical membrane-spanning segments follow: residues 93-113 (ILFG…PVLL), 123-143 (SLVW…LGAW), 155-175 (RPFI…LLNG), 191-211 (WGIL…DSAD), 233-253 (IHAL…GIHW), and 268-288 (VIYV…LISI). Threonine 500 is modified (phosphothreonine). The next 6 helical transmembrane spans lie at 536 to 556 (GWLS…EVVF), 576 to 596 (VTMG…YSAI), 606 to 626 (VRTL…LATL), 630 to 650 (LYVV…LCTL), 688 to 708 (FLAQ…VGSA), and 710 to 730 (GVMY…SLCV).

It belongs to the glycoside-pentoside-hexuronide (GPH) cation symporter transporter (TC 2.A.2) family.

It localises to the membrane. The enzyme catalyses D-galactose(in) + H(+)(in) = D-galactose(out) + H(+)(out). It catalyses the reaction D-glucose(out) + H(+)(out) = D-glucose(in) + H(+)(in). In terms of biological role, proton-associated glucose transporter in the brain. The protein is Proton-associated sugar transporter A of Mus musculus (Mouse).